Reading from the N-terminus, the 853-residue chain is DNA mismatch repair protein MutS (853 aa).

614-621 (GPNMGGKS) provides a ligand contact to ATP.

This sequence belongs to the DNA mismatch repair MutS family.

Functionally, this protein is involved in the repair of mismatches in DNA. It is possible that it carries out the mismatch recognition step. This protein has a weak ATPase activity. This Citrobacter koseri (strain ATCC BAA-895 / CDC 4225-83 / SGSC4696) protein is DNA mismatch repair protein MutS.